Reading from the N-terminus, the 513-residue chain is MQLSPSEISGLIKQRIEKFDNSVELKSEGTIVSVADGIVTIYGLNDVTAGEMIKLPGDVYGLALNLNTDSVGAVVLGDYEHIKEGDKAYCTGRILEVPVGEALLGRVVDALGNPIDGKGEVATDLTSPIEKIAPGVIWRKSVDQALQTGIKSIDSMVPIGRGQRELIIGDRQIGKTAIAVDTIINQKGTGVKCIYVAIGQKASTIANIVRQLEEYGAMEHTIIVAATASDSAALQYIAPYAGCSMGEYFRDRGQDALIVYDDLTKQAWAYRQISLLLRRPPGREAYPGDVFYLHSRLLERAARVNEEYVEKFTNGEVKGKTGSLTALPIIETQAGDISAFVPTNVISITDGQIFLETDLFNSGLRPAINPGNSVSRVGGAAQTKIIKKLGGGIRLALAQYRELEAFSQFASDLDEATRAQLNRGQRVTELLKQKQFSTLSVALMALSLYAADNGYLDNLEVSEVIPFESALHALAETKYSDVIAEINETDKYDADIADKLKIIVEDCKANQAW.

169-176 (GDRQIGKT) is an ATP binding site.

The protein belongs to the ATPase alpha/beta chains family. As to quaternary structure, F-type ATPases have 2 components, CF(1) - the catalytic core - and CF(0) - the membrane proton channel. CF(1) has five subunits: alpha(3), beta(3), gamma(1), delta(1), epsilon(1). CF(0) has three main subunits: a(1), b(2) and c(9-12). The alpha and beta chains form an alternating ring which encloses part of the gamma chain. CF(1) is attached to CF(0) by a central stalk formed by the gamma and epsilon chains, while a peripheral stalk is formed by the delta and b chains.

The protein resides in the cell inner membrane. It carries out the reaction ATP + H2O + 4 H(+)(in) = ADP + phosphate + 5 H(+)(out). Functionally, produces ATP from ADP in the presence of a proton gradient across the membrane. The alpha chain is a regulatory subunit. This Francisella tularensis subsp. holarctica (strain OSU18) protein is ATP synthase subunit alpha.